The primary structure comprises 1119 residues: Transcriptional repressor NF-X1 homolog (1119 aa).

Residues 1–214 (MADTEGTSSS…EPLTEEETKI (214 aa)) are disordered. Residues 7–17 (TSSSIPTSTNS) show a composition bias toward low complexity. Residues 18 to 29 (SRHRASRGRGGR) are compositionally biased toward basic residues. Residues 84–98 (ANFTFNPNAATFNPA) show a composition bias toward low complexity. Residues 113 to 128 (GASTHSNQNSRQQEPS) are compositionally biased toward polar residues. Over residues 143 to 154 (RQLEIQEQRGDS) the composition is skewed to basic and acidic residues. Residues 157 to 167 (QNQSRQNNRNQ) are compositionally biased toward low complexity. Over residues 174–193 (ANQQNKSVQNPSRNPGNSRR) the composition is skewed to polar residues. The span at 198-214 (RRREQKEEPLTEEETKI) shows a compositional bias: basic and acidic residues. The RING-type; degenerate zinc-finger motif lies at 235-287 (CAICYTRITTRQGVWSCKTCYHIFHISTGCITDWARSSRDKEGANTWRCPTCQ). 9 NF-X1-type zinc fingers span residues 330-348 (CPHP…ECKL), 383-402 (CGQH…ECTV), 439-458 (CGIH…ECET), 500-523 (CGTP…PCNL), 565-584 (CGMH…FCLQ), 592-611 (CGIH…PCLQ), 649-668 (CDHS…PCTQ), 703-726 (CGVH…KCTK), and 735-756 (CEHP…PCKA). The R3H domain maps to 867-937 (IDFVKSVEKI…KRSIVLTAVR (71 aa)). Disordered regions lie at residues 1024–1047 (VDSD…PKDW) and 1078–1119 (AAKK…ELLE). A compositionally biased stretch (polar residues) spans 1032-1041 (NVPTTSNLVS). A compositionally biased stretch (acidic residues) spans 1086 to 1097 (PTWEDQCDEDAP).

Belongs to the NFX1 family.

It is found in the nucleus. Functionally, may play a role in transcription regulation. This Caenorhabditis elegans protein is Transcriptional repressor NF-X1 homolog (nfx-1).